A 411-amino-acid polypeptide reads, in one-letter code: Citrate synthase (411 aa).

Catalysis depends on residues H304 and D363.

The protein belongs to the citrate synthase family.

The enzyme catalyses oxaloacetate + acetyl-CoA + H2O = citrate + CoA + H(+). It functions in the pathway carbohydrate metabolism; tricarboxylic acid cycle; isocitrate from oxaloacetate: step 1/2. In Rickettsia helvetica, this protein is Citrate synthase (gltA).